The following is a 279-amino-acid chain: FALAHMVNDFDILKSYLDEGANGVETDITFSDEGEPEYAFHGVPCDCKRWCRRTVGFNEYLQHVRDLSTPGNPKFREHFIAIVLDLKLNGLSQEALAHGGMRLADKLIAYYWAHGRNATRITFIVSVPKTSEKVFLKTFLEEIKAVGYDDMLSKVAFDFTDNGDFSETQKVFEGLGIHEHIWASDGITNCIPLLFRGTSRLEDLIRQRDVPGYKYISKVYAWTYDKETSVVKALELGVDGVMTNYADFVIGIINKPEHSSKYRLATYQDNPFEKFVKSA.

H5 is an active-site residue. E25 and D27 together coordinate Mg(2+). The active-site Nucleophile is H41. Intrachain disulfides connect C45–C51 and C47–C190. D85 provides a ligand contact to Mg(2+).

The protein belongs to the arthropod phospholipase D family. Class II subfamily. Mg(2+) serves as cofactor. Expressed by the venom gland.

It is found in the secreted. The catalysed reaction is an N-(acyl)-sphingosylphosphocholine = an N-(acyl)-sphingosyl-1,3-cyclic phosphate + choline. It carries out the reaction an N-(acyl)-sphingosylphosphoethanolamine = an N-(acyl)-sphingosyl-1,3-cyclic phosphate + ethanolamine. It catalyses the reaction a 1-acyl-sn-glycero-3-phosphocholine = a 1-acyl-sn-glycero-2,3-cyclic phosphate + choline. The enzyme catalyses a 1-acyl-sn-glycero-3-phosphoethanolamine = a 1-acyl-sn-glycero-2,3-cyclic phosphate + ethanolamine. Dermonecrotic toxins cleave the phosphodiester linkage between the phosphate and headgroup of certain phospholipids (sphingolipid and lysolipid substrates), forming an alcohol (often choline) and a cyclic phosphate. This toxin acts on sphingomyelin (SM). It may also act on ceramide phosphoethanolamine (CPE), lysophosphatidylcholine (LPC) and lysophosphatidylethanolamine (LPE), but not on lysophosphatidylserine (LPS), and lysophosphatidylglycerol (LPG). It acts by transphosphatidylation, releasing exclusively cyclic phosphate products as second products. Induces dermonecrosis, hemolysis, increased vascular permeability, edema, inflammatory response, and platelet aggregation. The protein is Dermonecrotic toxin LspiSicTox-betaIE3ii of Loxosceles spinulosa (Recluse spider).